The primary structure comprises 323 residues: Fatty acid desaturase 4, chloroplastic (323 aa).

The transit peptide at 1 to 77 (MAVSLPTKYP…PRPNREKLVV (77 aa)) directs the protein to the chloroplast. The next 2 helical transmembrane spans lie at 101–121 (WVAA…IGGF) and 131–151 (LAGY…HWAI). The Histidine box-1 motif lies at 170–173 (QGHH). A helical membrane pass occupies residues 204-224 (LAFNDPVFHGFVCTFAFCILF). Positions 229-233 (HAWAH) match the Histidine box-2 motif. Positions 258 to 262 (HAEHH) match the Histidine box-3 motif.

It belongs to the fatty acid desaturase CarF family. Requires Fe(2+) as cofactor.

The protein localises to the plastid. The protein resides in the chloroplast membrane. The catalysed reaction is a 1-acyl-2-hexadecanoyl-glycerolipid + 2 reduced [2Fe-2S]-[ferredoxin] + O2 + 2 H(+) = a 1-acyl-2-[(3E)-hexadec-3-enoyl]-glycerolipid + 2 oxidized [2Fe-2S]-[ferredoxin] + 2 H2O. Its pathway is lipid metabolism; fatty acid metabolism. Fatty acid desaturase involved in the production of chloroplast-specific phosphatidylglycerol molecular species containing 16:1(3E). Catalyzes the formation of a trans double bond introduced close to the carboxyl group of palmitic acid, which is specifically esterified to the sn-2 glyceryl carbon of phosphatidylglycerol. This chain is Fatty acid desaturase 4, chloroplastic, found in Arabidopsis thaliana (Mouse-ear cress).